A 474-amino-acid chain; its full sequence is Mercuric reductase (474 aa).

FAD-binding residues include A19, G39, and T44. A disulfide bond links C45 and C50. FAD is bound by residues K54, A119, D315, and V323. Hg(2+) contacts are provided by C471 and C472.

It belongs to the class-I pyridine nucleotide-disulfide oxidoreductase family. In terms of assembly, homodimer. FAD serves as cofactor.

It carries out the reaction Hg + NADP(+) + H(+) = Hg(2+) + NADPH. In terms of biological role, resistance to Hg(2+) in bacteria appears to be governed by a specialized system which includes mercuric reductase. MerA protein is responsible for volatilizing mercury as Hg(0). The sequence is that of Mercuric reductase (merA) from Streptomyces lividans.